A 153-amino-acid chain; its full sequence is Pheromone-binding protein Gp-9 (153 aa).

The N-terminal stretch at 1 to 19 (MKTFVLHIFIFALVAFASA) is a signal peptide. 3 disulfides stabilise this stretch: Cys37–Cys77, Cys73–Cys129, and Cys118–Cys138.

It belongs to the PBP/GOBP family. In terms of assembly, homodimer.

It localises to the secreted. Functionally, colony queen number, a major feature of social organization, is associated with worker genotype for Gp-9. Colonies are headed by either a single reproductive queen (monogyne form) or multiple queens (polygyne form). Differences in worker Gp-9 genotypes between social forms may cause differences in workers' abilities to recognize queens and regulate their numbers. This Solenopsis tridens (Fire ant) protein is Pheromone-binding protein Gp-9.